The primary structure comprises 433 residues: Serine--tRNA ligase (433 aa).

235–237 (TSE) serves as a coordination point for L-serine. Residue 266 to 268 (RSE) participates in ATP binding. L-serine is bound at residue Glu289. 353–356 (EISS) contacts ATP. Ser388 lines the L-serine pocket.

The protein belongs to the class-II aminoacyl-tRNA synthetase family. Type-1 seryl-tRNA synthetase subfamily. In terms of assembly, homodimer. The tRNA molecule binds across the dimer.

It is found in the cytoplasm. The enzyme catalyses tRNA(Ser) + L-serine + ATP = L-seryl-tRNA(Ser) + AMP + diphosphate + H(+). The catalysed reaction is tRNA(Sec) + L-serine + ATP = L-seryl-tRNA(Sec) + AMP + diphosphate + H(+). Its pathway is aminoacyl-tRNA biosynthesis; selenocysteinyl-tRNA(Sec) biosynthesis; L-seryl-tRNA(Sec) from L-serine and tRNA(Sec): step 1/1. Functionally, catalyzes the attachment of serine to tRNA(Ser). Is also able to aminoacylate tRNA(Sec) with serine, to form the misacylated tRNA L-seryl-tRNA(Sec), which will be further converted into selenocysteinyl-tRNA(Sec). This Burkholderia lata (strain ATCC 17760 / DSM 23089 / LMG 22485 / NCIMB 9086 / R18194 / 383) protein is Serine--tRNA ligase.